Consider the following 265-residue polypeptide: Large ribosomal subunit protein bL9m (265 aa).

A mitochondrion-targeting transit peptide spans Met1–Ser49.

This sequence belongs to the bacterial ribosomal protein bL9 family. Component of the mitochondrial ribosome large subunit (39S) which comprises a 16S rRNA and about 50 distinct proteins.

The protein resides in the mitochondrion. The sequence is that of Large ribosomal subunit protein bL9m (Mrpl9) from Mus musculus (Mouse).